The primary structure comprises 640 residues: MPTITLPDGSQRSFDHPVSVAEVAASIGAGLAKATVAGKVNGKLVDACDIIDSDATLQIITPKDEEGLEIIRHSCAHLVGHAVKQLYPTAKMVIGPVIDEGFYYDIAFERPFTPDDMAAIEQRMHQLIDTEYDVIKKVTPRAEVIEVFKARGEDYKLRLVEDMPNEQAMGLYYHEEYVDMCRGPHVPNTRFLKSFKLTKLSGAYWRGDAKNEQLQRVYGTAWADKKQLAAYIQRIEEAEKRDHRKIGKRLGLFHTQEEAPGMVFWHPNGWTLYQVLEQYMRKVQRDNGYLEIKTPQVVDRSLWEKSGHWANYADNMFTTESESRDYAIKPMNCPCHVQVFNQGLKSYRELPMRLAEFGACHRNEPSGALHGIMRVRAFTQDDAHIFCTEEQMQAESAAFIKLTMDVYRDFGFTDVEMKLSTRPEKRVGSDELWDRAEAALAAALDSAGLPYDLQPGEGAFYGPKIEFSLKDCLGRVWQCGTLQLDFNLPVRLGAEYVSEDNSRKHPVMLHRAILGSFERFVGILIEHYEGAFPAWLAPTQAVIMNITDKQADFVVQVEKTLNESGFRAKSDLRNEKIGFKIREHTLLKVPYLLVIGDKEVEMQTVAVRTREGADLGSMPVAQFAEFLAQAVSRRGRPDSE.

A TGS domain is found at 1 to 61; sequence MPTITLPDGS…DSDATLQIIT (61 aa). The segment at 242–533 is catalytic; sequence DHRKIGKRLG…LIEHYEGAFP (292 aa). Zn(2+) is bound by residues cysteine 333, histidine 384, and histidine 510.

Belongs to the class-II aminoacyl-tRNA synthetase family. Homodimer. The cofactor is Zn(2+).

It localises to the cytoplasm. It catalyses the reaction tRNA(Thr) + L-threonine + ATP = L-threonyl-tRNA(Thr) + AMP + diphosphate + H(+). Catalyzes the attachment of threonine to tRNA(Thr) in a two-step reaction: L-threonine is first activated by ATP to form Thr-AMP and then transferred to the acceptor end of tRNA(Thr). Also edits incorrectly charged L-seryl-tRNA(Thr). In Pseudomonas fluorescens (strain Pf0-1), this protein is Threonine--tRNA ligase.